The chain runs to 120 residues: uncharacterized protein (120 aa).

An N-terminal signal peptide occupies residues 1–22 (MSTSGMLFIFATFCPCFLSCCA). At 23 to 59 (FMSHWKLKDFSFRFLRMCGERSLVVCYPLKLLKQIRS) the chain is on the extracellular side. The helical transmembrane segment at 60–80 (LFSIAIGHLSLMLIEGSANLL) threads the bilayer. Topologically, residues 81 to 120 (SLEEISRTLLRILDFVGNKNMRTYLEVPLCRWHISQARPN) are cytoplasmic.

It is found in the membrane. This is an uncharacterized protein from Schizosaccharomyces pombe (strain 972 / ATCC 24843) (Fission yeast).